The chain runs to 200 residues: Dual specificity tyrosine-phosphorylation-regulated kinase 1A (200 aa).

At tyrosine 41 the chain carries Phosphotyrosine; by autocatalysis. Lysine 58 serves as a coordination point for ATP. Residue tyrosine 76 is modified to Phosphotyrosine; by autocatalysis. At serine 88 the chain carries Phosphoserine; by autocatalysis. Threonine 122 carries the post-translational modification Phosphothreonine; by autocatalysis.

It belongs to the protein kinase superfamily. CMGC Ser/Thr protein kinase family. MNB/DYRK subfamily. In terms of assembly, interacts with RAD54L2/ARIP4. Interacts with CRY2. Interacts with RANBP9. Interacts with WDR68. Interacts with SIRT1. Can also autophosphorylate on serine and threonine residues (in vitro). Autophosphorylated on numerous tyrosine residues.

Its subcellular location is the nucleus. The catalysed reaction is L-tyrosyl-[protein] + ATP = O-phospho-L-tyrosyl-[protein] + ADP + H(+). The enzyme catalyses L-seryl-[protein] + ATP = O-phospho-L-seryl-[protein] + ADP + H(+). It catalyses the reaction L-threonyl-[protein] + ATP = O-phospho-L-threonyl-[protein] + ADP + H(+). It carries out the reaction [DNA-directed RNA polymerase] + ATP = phospho-[DNA-directed RNA polymerase] + ADP + H(+). With respect to regulation, inhibited by RANBP9. Its function is as follows. Dual-specificity kinase which possesses both serine/threonine and tyrosine kinase activities. Exhibits a substrate preference for proline at position P+1 and arginine at position P-3. Plays an important role in double-strand breaks (DSBs) repair following DNA damage. Mechanistically, phosphorylates RNF169 and increases its ability to block accumulation of TP53BP1 at the DSB sites thereby promoting homologous recombination repair (HRR). Also acts as a positive regulator of transcription by acting as a CTD kinase that mediates phosphorylation of the CTD (C-terminal domain) of the large subunit of RNA polymerase II (RNAP II) POLR2A. May play a role in a signaling pathway regulating nuclear functions of cell proliferation. Modulates alternative splicing by phosphorylating the splice factor SRSF6. Has pro-survival function and negatively regulates the apoptotic process. Promotes cell survival upon genotoxic stress through phosphorylation of SIRT1. This in turn inhibits p53/TP53 activity and apoptosis. Phosphorylates SEPTIN4, SEPTIN5 and SF3B1 at 'Thr-434'. In Oryctolagus cuniculus (Rabbit), this protein is Dual specificity tyrosine-phosphorylation-regulated kinase 1A.